The primary structure comprises 169 residues: tRNA (cytidine(56)-2'-O)-methyltransferase (169 aa).

S-adenosyl-L-methionine contacts are provided by residues Leu-77, 103-107, and 121-128; these read GSEKV and IGNQPHSE.

The protein belongs to the aTrm56 family. In terms of assembly, homodimer.

Its subcellular location is the cytoplasm. The enzyme catalyses cytidine(56) in tRNA + S-adenosyl-L-methionine = 2'-O-methylcytidine(56) in tRNA + S-adenosyl-L-homocysteine + H(+). In terms of biological role, specifically catalyzes the AdoMet-dependent 2'-O-ribose methylation of cytidine at position 56 in tRNAs. This chain is tRNA (cytidine(56)-2'-O)-methyltransferase, found in Sulfurisphaera tokodaii (strain DSM 16993 / JCM 10545 / NBRC 100140 / 7) (Sulfolobus tokodaii).